The following is a 187-amino-acid chain: MSYNISLDSLPYFESTYNEEDRSAAAQIVEEELKRSGGLLIKQEEQKKKFQSHRLSDRLENAIVAAGKGEKLAAIDVQRYIQLKPPGTRESLLQSAVVWEYQKSRNDNLYLLEKHGEKAFDSSLEALEVQLELLEKELVNTKKLSQGCNRKRKHYQMEVGARLAEAEVKFGQLLQSSIQCRVATLLS.

Belongs to the SPF27 family. In terms of assembly, belongs to the 40S cdc5-associated complex (or cwf complex), a spliceosome sub-complex reminiscent of a late-stage spliceosome composed of the U2, U5 and U6 snRNAs and at least brr2, cdc5, cwf2/prp3, cwf3/syf1, cwf4/syf3, cwf5/ecm2, spp42/cwf6, cwf7/spf27, cwf8, cwf9, cwf10, cwf11, cwf12, prp45/cwf13, cwf14, cwf15, cwf16, cwf17, cwf18, cwf19, cwf20, cwf21, cwf22, cwf23, cwf24, cwf25, cwf26, cyp7/cwf27, cwf28, cwf29/ist3, lea1, msl1, prp5/cwf1, prp10, prp12/sap130, prp17, prp22, sap61, sap62, sap114, sap145, slu7, smb1, smd1, smd3, smf1, smg1 and syf2.

The protein resides in the nucleus. Its function is as follows. Involved in mRNA splicing. This chain is Pre-mRNA-splicing factor cwf7 (cwf7), found in Schizosaccharomyces pombe (strain 972 / ATCC 24843) (Fission yeast).